The primary structure comprises 199 residues: Transcription regulator complex subunit bur6 (199 aa).

The interval 106 to 199 is disordered; that stretch reads PPIKAERKTK…SEASSASGDE (94 aa). The segment covering 112 to 121 has biased composition (basic residues); the sequence is RKTKRPRARR. The segment covering 185-199 has biased composition (polar residues); that stretch reads SDKTTSEASSASGDE.

Belongs to the NC2 alpha/DRAP1 family.

The protein resides in the nucleus. Transcription regulator complex subunit that is essential for cell cycle progression. The chain is Transcription regulator complex subunit bur6 from Schizosaccharomyces pombe (strain 972 / ATCC 24843) (Fission yeast).